We begin with the raw amino-acid sequence, 461 residues long: Coronin-1A (461 aa).

An N-acetylserine modification is found at serine 2. At serine 2 the chain carries Phosphoserine; by PKC. WD repeat units lie at residues 13–63 (HVFG…LVLP), 73–110 (NVPM…MVWE), 123–160 (PVVT…LVWD), 164–204 (GVAV…RIIE), 207–251 (KGTI…ALWD), 258–296 (PLSL…RYFE), and 302–349 (PFLH…EPIA). Over residues 404–418 (LRVNRGLDTGRKRTT) the composition is skewed to basic and acidic residues. Positions 404-429 (LRVNRGLDTGRKRTTPEASGAPSSDA) are disordered. Phosphothreonine; by PKC is present on threonine 412. Threonine 418 carries the post-translational modification Phosphothreonine. Serine 422 bears the Phosphoserine mark. Residues 424–460 (APSSDAISRLEEEMRKLQATVQELQKRLDRLEETVQA) are a coiled coil. An N6-acetyllysine modification is found at lysine 449.

Belongs to the WD repeat coronin family. In terms of assembly, binds actin. Phosphorylation at Thr-412 by PKC strongly down-regulates the association with actin. In terms of processing, polyubiquitinated by RNF128 with 'Lys-48'-linked chains, leading to proteasomal degradation. In terms of tissue distribution, expressed in brain, thymus, spleen, bone marrow and lymph node. Low in lung and gut.

It is found in the cytoplasm. It localises to the cytoskeleton. The protein resides in the cell cortex. Its subcellular location is the cytoplasmic vesicle. The protein localises to the phagosome membrane. In terms of biological role, may be a crucial component of the cytoskeleton of highly motile cells, functioning both in the invagination of large pieces of plasma membrane, as well as in forming protrusions of the plasma membrane involved in cell locomotion. In mycobacteria-infected macrophages, its retention on the phagosomal membrane prevents fusion between phagosomes and lysosomes. The chain is Coronin-1A (CORO1A) from Bos taurus (Bovine).